A 344-amino-acid chain; its full sequence is Holliday junction branch migration complex subunit RuvB (344 aa).

A large ATPase domain (RuvB-L) region spans residues 1–180 (MSRIVSGEAQ…FGIPVRLEFY (180 aa)). ATP is bound by residues L19, R20, G61, K64, T65, T66, R170, Y180, and R217. Mg(2+) is bound at residue T65. Residues 181–251 (THDELARVLL…AAAAALARLD (71 aa)) form a small ATPAse domain (RuvB-S) region. Residues 254–344 (EVGLDALDRR…AAPPADLFDK (91 aa)) form a head domain (RuvB-H) region. Residues R290, R309, and R314 each coordinate DNA.

This sequence belongs to the RuvB family. Homohexamer. Forms an RuvA(8)-RuvB(12)-Holliday junction (HJ) complex. HJ DNA is sandwiched between 2 RuvA tetramers; dsDNA enters through RuvA and exits via RuvB. An RuvB hexamer assembles on each DNA strand where it exits the tetramer. Each RuvB hexamer is contacted by two RuvA subunits (via domain III) on 2 adjacent RuvB subunits; this complex drives branch migration. In the full resolvosome a probable DNA-RuvA(4)-RuvB(12)-RuvC(2) complex forms which resolves the HJ.

The protein resides in the cytoplasm. The catalysed reaction is ATP + H2O = ADP + phosphate + H(+). Its function is as follows. The RuvA-RuvB-RuvC complex processes Holliday junction (HJ) DNA during genetic recombination and DNA repair, while the RuvA-RuvB complex plays an important role in the rescue of blocked DNA replication forks via replication fork reversal (RFR). RuvA specifically binds to HJ cruciform DNA, conferring on it an open structure. The RuvB hexamer acts as an ATP-dependent pump, pulling dsDNA into and through the RuvAB complex. RuvB forms 2 homohexamers on either side of HJ DNA bound by 1 or 2 RuvA tetramers; 4 subunits per hexamer contact DNA at a time. Coordinated motions by a converter formed by DNA-disengaged RuvB subunits stimulates ATP hydrolysis and nucleotide exchange. Immobilization of the converter enables RuvB to convert the ATP-contained energy into a lever motion, pulling 2 nucleotides of DNA out of the RuvA tetramer per ATP hydrolyzed, thus driving DNA branch migration. The RuvB motors rotate together with the DNA substrate, which together with the progressing nucleotide cycle form the mechanistic basis for DNA recombination by continuous HJ branch migration. Branch migration allows RuvC to scan DNA until it finds its consensus sequence, where it cleaves and resolves cruciform DNA. The protein is Holliday junction branch migration complex subunit RuvB of Phenylobacterium zucineum (strain HLK1).